Reading from the N-terminus, the 325-residue chain is Fructose-1,6-bisphosphatase class 1 (325 aa).

Mg(2+) is bound by residues glutamate 84, aspartate 103, leucine 105, and aspartate 106. Residues 106-109 (DGSS), asparagine 196, and lysine 262 contribute to the substrate site. Glutamate 268 contributes to the Mg(2+) binding site.

The protein belongs to the FBPase class 1 family. As to quaternary structure, homotetramer. It depends on Mg(2+) as a cofactor.

The protein localises to the cytoplasm. The catalysed reaction is beta-D-fructose 1,6-bisphosphate + H2O = beta-D-fructose 6-phosphate + phosphate. It participates in carbohydrate biosynthesis; gluconeogenesis. In Shewanella baltica (strain OS195), this protein is Fructose-1,6-bisphosphatase class 1.